Consider the following 734-residue polypeptide: Elongation factor G, mitochondrial (734 aa).

The transit peptide at 1–32 directs the protein to the mitochondrion; that stretch reads MTSFLTSRFGGLALRNVMNNKNGINSFGLRCF. The 281-residue stretch at 38–318 folds into the tr-type G domain; it reads SGLRNIGISA…GVIKYLPSPN (281 aa). GTP contacts are provided by residues 47 to 54, 114 to 118, and 168 to 171; these read AHIDSGKT, DTPGH, and NKLD.

It belongs to the TRAFAC class translation factor GTPase superfamily. Classic translation factor GTPase family. EF-G/EF-2 subfamily.

It is found in the mitochondrion. The enzyme catalyses GTP + H2O = GDP + phosphate + H(+). It functions in the pathway protein biosynthesis; polypeptide chain elongation. In terms of biological role, mitochondrial GTPase that catalyzes the GTP-dependent ribosomal translocation step during translation elongation. During this step, the ribosome changes from the pre-translocational (PRE) to the post-translocational (POST) state as the newly formed A-site-bound peptidyl-tRNA and P-site-bound deacylated tRNA move to the P and E sites, respectively. Catalyzes the coordinated movement of the two tRNA molecules, the mRNA and conformational changes in the ribosome. This is Elongation factor G, mitochondrial (gfm1) from Dictyostelium discoideum (Social amoeba).